The primary structure comprises 701 residues: Elongation factor G (701 aa).

The tr-type G domain occupies 8-290 (SLYRNIGISA…AVVELLPAPT (283 aa)). GTP is bound by residues 17–24 (AHIDAGKT), 88–92 (DTPGH), and 142–145 (NKMD).

The protein belongs to the TRAFAC class translation factor GTPase superfamily. Classic translation factor GTPase family. EF-G/EF-2 subfamily.

Its subcellular location is the cytoplasm. Its function is as follows. Catalyzes the GTP-dependent ribosomal translocation step during translation elongation. During this step, the ribosome changes from the pre-translocational (PRE) to the post-translocational (POST) state as the newly formed A-site-bound peptidyl-tRNA and P-site-bound deacylated tRNA move to the P and E sites, respectively. Catalyzes the coordinated movement of the two tRNA molecules, the mRNA and conformational changes in the ribosome. This chain is Elongation factor G, found in Neisseria meningitidis serogroup B (strain ATCC BAA-335 / MC58).